Here is a 1604-residue protein sequence, read N- to C-terminus: Ubiquitin carboxyl-terminal hydrolase 32 (1604 aa).

EF-hand domains follow at residues 91-126 (KDEE…VDGK), 228-263 (IRPS…CCRG), and 264-299 (PLAE…LLEV). Ca(2+) contacts are provided by aspartate 241, asparagine 243, aspartate 245, histidine 247, glutamate 252, aspartate 277, aspartate 279, aspartate 281, and glutamate 288. Residues 369-585 (ATPEEEGQII…ANLALPRPVI (217 aa)) enclose the DUSP domain. The 834-residue stretch at 734 to 1567 (TGLSNLGNTC…SAYILFYEQQ (834 aa)) folds into the USP domain. Cysteine 743 functions as the Nucleophile in the catalytic mechanism. A Phosphotyrosine modification is found at tyrosine 1173. Disordered stretches follow at residues 1343–1362 (KKVD…SKSP) and 1367–1431 (ANII…DASK). Phosphoserine occurs at positions 1350, 1372, 1376, and 1454. Low complexity predominate over residues 1367–1399 (ANIISSPKGSPSSSRKSGTSCPSSKNSSPNSSP). Residue histidine 1526 is the Proton acceptor of the active site. A Phosphoserine modification is found at serine 1588. Cysteine methyl ester is present on cysteine 1601. Cysteine 1601 is lipidated: S-farnesyl cysteine. The propeptide at 1602–1604 (VLQ) is removed in mature form.

Belongs to the peptidase C19 family.

The protein localises to the golgi apparatus membrane. The catalysed reaction is Thiol-dependent hydrolysis of ester, thioester, amide, peptide and isopeptide bonds formed by the C-terminal Gly of ubiquitin (a 76-residue protein attached to proteins as an intracellular targeting signal).. Deubiquitinase that can remove conjugated ubiquitin from target proteins, such as RAB7A and LAMTOR1. Acts as a positive regulator of the mTORC1 signaling by mediating deubiquitination of LAMTOR1, thereby promoting the association between LAMTOR1 and the lysosomal V-ATPase complex and subsequent activation of the mTORC1 complex. The protein is Ubiquitin carboxyl-terminal hydrolase 32 (USP32) of Homo sapiens (Human).